The chain runs to 375 residues: Cinnamyl alcohol dehydrogenase 3 (375 aa).

Residue Cys-44 coordinates Zn(2+). Residue Ser-46 coordinates NADP(+). Zn(2+) contacts are provided by His-66, Glu-67, Cys-97, Cys-100, Cys-103, Cys-111, and Cys-160. Residues Thr-164, 186-191 (GLGGLG), 209-214 (SRSSEK), Thr-249, Gly-273, and 296-298 (SQI) each bind NADP(+).

This sequence belongs to the zinc-containing alcohol dehydrogenase family. As to quaternary structure, homodimer. Zn(2+) serves as cofactor. As to expression, expressed in the root tips. Expressed in the apical meristematic regions, leaf veins and at the base of the trichomes. Expressed at the base of the stems. Expressed in the abscission zones of newly formed siliques.

The enzyme catalyses (E)-cinnamyl alcohol + NADP(+) = (E)-cinnamaldehyde + NADPH + H(+). The catalysed reaction is (E)-coniferol + NADP(+) = (E)-coniferaldehyde + NADPH + H(+). It catalyses the reaction (E)-sinapyl alcohol + NADP(+) = (E)-sinapaldehyde + NADPH + H(+). It carries out the reaction (E)-4-coumaroyl alcohol + NADP(+) = (E)-4-coumaraldehyde + NADPH + H(+). The enzyme catalyses (E)-caffeyl alcohol + NADP(+) = (E)-caffeyl aldehyde + NADPH + H(+). Its pathway is aromatic compound metabolism; phenylpropanoid biosynthesis. Involved in lignin biosynthesis. Catalyzes the final step specific for the production of lignin monomers. Catalyzes the NADPH-dependent reduction of coniferaldehyde, 5-hydroxyconiferaldehyde, sinapaldehyde, 4-coumaraldehyde and caffeyl aldehyde to their respective alcohols. This chain is Cinnamyl alcohol dehydrogenase 3, found in Arabidopsis thaliana (Mouse-ear cress).